Reading from the N-terminus, the 249-residue chain is 2,3-bisphosphoglycerate-dependent phosphoglycerate mutase (249 aa).

Substrate contacts are provided by residues 9–16, 22–23, Arg61, 88–91, Lys99, 115–116, and 184–185; these read RHGQSQWN, TG, ERHY, RR, and GN. The active-site Tele-phosphohistidine intermediate is His10. The active-site Proton donor/acceptor is Glu88.

Belongs to the phosphoglycerate mutase family. BPG-dependent PGAM subfamily. As to quaternary structure, homodimer.

It catalyses the reaction (2R)-2-phosphoglycerate = (2R)-3-phosphoglycerate. Its pathway is carbohydrate degradation; glycolysis; pyruvate from D-glyceraldehyde 3-phosphate: step 3/5. Its function is as follows. Catalyzes the interconversion of 2-phosphoglycerate and 3-phosphoglycerate. In Xanthomonas euvesicatoria pv. vesicatoria (strain 85-10) (Xanthomonas campestris pv. vesicatoria), this protein is 2,3-bisphosphoglycerate-dependent phosphoglycerate mutase.